The sequence spans 473 residues: ATP synthase subunit beta (473 aa).

An ATP-binding site is contributed by 153–160; sequence GGAGVGKT.

This sequence belongs to the ATPase alpha/beta chains family. As to quaternary structure, F-type ATPases have 2 components, CF(1) - the catalytic core - and CF(0) - the membrane proton channel. CF(1) has five subunits: alpha(3), beta(3), gamma(1), delta(1), epsilon(1). CF(0) has three main subunits: a(1), b(2) and c(9-12). The alpha and beta chains form an alternating ring which encloses part of the gamma chain. CF(1) is attached to CF(0) by a central stalk formed by the gamma and epsilon chains, while a peripheral stalk is formed by the delta and b chains.

The protein resides in the cell inner membrane. The catalysed reaction is ATP + H2O + 4 H(+)(in) = ADP + phosphate + 5 H(+)(out). Produces ATP from ADP in the presence of a proton gradient across the membrane. The catalytic sites are hosted primarily by the beta subunits. This chain is ATP synthase subunit beta, found in Rickettsia bellii (strain OSU 85-389).